We begin with the raw amino-acid sequence, 106 residues long: Large ribosomal subunit protein bL21 (106 aa).

This sequence belongs to the bacterial ribosomal protein bL21 family. Part of the 50S ribosomal subunit. Contacts protein L20.

In terms of biological role, this protein binds to 23S rRNA in the presence of protein L20. The protein is Large ribosomal subunit protein bL21 of Chlamydia pneumoniae (Chlamydophila pneumoniae).